The primary structure comprises 239 residues: MKDTLFNQSLNKRFCFDEKVAHVFDDMLERSIPYYYEMLDLGAYFIAQNLKENLNAKPLIYDLGCSTGNFFIALNRQIQQEIELVGIDNSMPMLKKAQEKLKDFNNVRFECMDFLEVEFKEASAFSLLFVLQFVRPMQREVLLKKIYNSLALNGVLLVGEKIMSEDRILDKQMIELYYLYKQNQGYSHNEIAFKREALENVLVPYSLKENIALLESVGFKHVEAVFKWVNFTLLVARKT.

S-adenosyl-L-methionine-binding positions include Tyr-35, Gly-64 to Ser-66, Asp-88 to Asn-89, and Arg-195.

Belongs to the class I-like SAM-binding methyltransferase superfamily. Cx-SAM synthase family. Homodimer.

The catalysed reaction is prephenate + S-adenosyl-L-methionine = carboxy-S-adenosyl-L-methionine + 3-phenylpyruvate + H2O. In terms of biological role, catalyzes the conversion of S-adenosyl-L-methionine (SAM) to carboxy-S-adenosyl-L-methionine (Cx-SAM). This chain is Carboxy-S-adenosyl-L-methionine synthase, found in Helicobacter pylori (strain HPAG1).